A 159-amino-acid polypeptide reads, in one-letter code: Putative ribosomal RNA large subunit methyltransferase H (159 aa).

S-adenosyl-L-methionine contacts are provided by residues Leu-76, Gly-108, and Leu-127–Phe-132.

The protein belongs to the RNA methyltransferase RlmH family.

It is found in the cytoplasm. It catalyses the reaction pseudouridine(1915) in 23S rRNA + S-adenosyl-L-methionine = N(3)-methylpseudouridine(1915) in 23S rRNA + S-adenosyl-L-homocysteine + H(+). Specifically methylates the pseudouridine at position 1915 (m3Psi1915) in 23S rRNA. The protein is Putative ribosomal RNA large subunit methyltransferase H of Methanoregula boonei (strain DSM 21154 / JCM 14090 / 6A8).